A 177-amino-acid polypeptide reads, in one-letter code: CDP-archaeol synthase (177 aa).

5 helical membrane-spanning segments follow: residues 6 to 26, 54 to 74, 90 to 110, 124 to 144, and 148 to 168; these read LFASLWYILPAYVANASACIF, CIFGILCGTLVGLIQGILVDF, VILAFFLSVGAIVGDAVGSFI, LLDQLDFVIGALAFGYIVAPI, and MIIIICLFTVFVHLLGNIIAY.

This sequence belongs to the CDP-archaeol synthase family. Mg(2+) serves as cofactor.

Its subcellular location is the cell membrane. The catalysed reaction is 2,3-bis-O-(geranylgeranyl)-sn-glycerol 1-phosphate + CTP + H(+) = CDP-2,3-bis-O-(geranylgeranyl)-sn-glycerol + diphosphate. It functions in the pathway membrane lipid metabolism; glycerophospholipid metabolism. Functionally, catalyzes the formation of CDP-2,3-bis-(O-geranylgeranyl)-sn-glycerol (CDP-archaeol) from 2,3-bis-(O-geranylgeranyl)-sn-glycerol 1-phosphate (DGGGP) and CTP. This reaction is the third ether-bond-formation step in the biosynthesis of archaeal membrane lipids. The sequence is that of CDP-archaeol synthase from Methanocaldococcus jannaschii (strain ATCC 43067 / DSM 2661 / JAL-1 / JCM 10045 / NBRC 100440) (Methanococcus jannaschii).